Consider the following 230-residue polypeptide: Putative transcription factor bHLH107 (230 aa).

The region spanning Ala44–Leu93 is the bHLH domain.

In terms of assembly, homodimer.

The protein resides in the nucleus. In Arabidopsis thaliana (Mouse-ear cress), this protein is Putative transcription factor bHLH107 (BHLH107).